Here is a 450-residue protein sequence, read N- to C-terminus: ATP-dependent protease ATPase subunit HslU (450 aa).

ATP is bound by residues V29, 71-76 (GVGKTE), D261, E328, and R400.

This sequence belongs to the ClpX chaperone family. HslU subfamily. A double ring-shaped homohexamer of HslV is capped on each side by a ring-shaped HslU homohexamer. The assembly of the HslU/HslV complex is dependent on binding of ATP.

The protein localises to the cytoplasm. Its function is as follows. ATPase subunit of a proteasome-like degradation complex; this subunit has chaperone activity. The binding of ATP and its subsequent hydrolysis by HslU are essential for unfolding of protein substrates subsequently hydrolyzed by HslV. HslU recognizes the N-terminal part of its protein substrates and unfolds these before they are guided to HslV for hydrolysis. This chain is ATP-dependent protease ATPase subunit HslU, found in Rickettsia prowazekii (strain Madrid E).